We begin with the raw amino-acid sequence, 466 residues long: Argininosuccinate lyase (466 aa).

The protein belongs to the lyase 1 family. Argininosuccinate lyase subfamily.

Its subcellular location is the cytoplasm. It catalyses the reaction 2-(N(omega)-L-arginino)succinate = fumarate + L-arginine. It participates in amino-acid biosynthesis; L-arginine biosynthesis; L-arginine from L-ornithine and carbamoyl phosphate: step 3/3. The chain is Argininosuccinate lyase from Desulfovibrio desulfuricans (strain ATCC 27774 / DSM 6949 / MB).